The chain runs to 494 residues: Solute carrier family 2, facilitated glucose transporter member 3 (494 aa).

Over 1–10 the chain is Cytoplasmic; the sequence is MGTTKVTPYL. The chain crosses the membrane as a helical span at residues 11–32; it reads IFATSVAAIGSFQFGYNTGVIN. The Extracellular portion of the chain corresponds to 33–64; it reads APEMIIRDFLNYTLDEKLDEPPSRLLLTNLWS. N-linked (GlcNAc...) asparagine glycosylation is present at asparagine 43. A helical transmembrane segment spans residues 65–84; it reads LSVAIFSVGGMIGSFSVGLF. Residues 85 to 89 lie on the Cytoplasmic side of the membrane; it reads NRFGR. Residues 90 to 110 form a helical membrane-spanning segment; it reads RNSMLIVNLLAVIGGCLMGFC. Residues 111 to 117 are Extracellular-facing; that stretch reads KISESVE. The chain crosses the membrane as a helical span at residues 118 to 141; that stretch reads MLILGRLVIGVFCGLCTGFVPMYI. Topologically, residues 142-152 are cytoplasmic; it reads GEISPTALRGA. A helical transmembrane segment spans residues 153-173; the sequence is FGTLNQLGIVIGILVAQIFGL. Glutamine 158 is a D-glucose binding site. Residues 174-182 lie on the Extracellular side of the membrane; that stretch reads EIILGSEVL. A helical membrane pass occupies residues 183-203; sequence WPVLLGFTIIPAILQSAALPF. Over 204–268 the chain is Cytoplasmic; the sequence is CPESPRFLLI…LFRAPSYRQP (65 aa). Threonine 231 carries the post-translational modification Phosphothreonine. The helical transmembrane segment at 269–289 threads the bilayer; that stretch reads IIISIVLQLSQQLSGINAVFY. The tract at residues 276–278 is important for selectivity against fructose; sequence QLS. Residues 279-280 and asparagine 285 each bind D-glucose; that span reads QQ. Residues 290–303 are Extracellular-facing; that stretch reads YSTGIFKDAGVKEP. A helical membrane pass occupies residues 304-324; it reads IYATIGAGVVNTIFTIVSVFL. Asparagine 314 provides a ligand contact to D-glucose. The Cytoplasmic segment spans residues 325-330; sequence VERAGR. A helical transmembrane segment spans residues 331 to 351; the sequence is RTLHLIGLGGMALCSVLMTVS. The Extracellular segment spans residues 352–362; sequence LLLKDKYDTMS. A helical membrane pass occupies residues 363–388; it reads LVCIAAILIYVAFFEIGPGPIPWFIV. Residues glutamate 377 and tryptophan 385 each contribute to the D-glucose site. Topologically, residues 389–398 are cytoplasmic; that stretch reads AELFSQGPRP. Residues 399 to 419 form a helical membrane-spanning segment; that stretch reads AAMAVAGCSNWTSNFLVGLLF. Residues 420–428 lie on the Extracellular side of the membrane; that stretch reads PSAAYYLGA. Residues 429-449 traverse the membrane as a helical segment; sequence YVFVIFAVFLVAFFIFTFFKV. The Cytoplasmic segment spans residues 450 to 494; it reads PETRGRTFEDITRAFEGQAAEANKLGKGPTMEMNSIQPIETTTHV. Serine 484 carries the phosphoserine modification. Threonine 491 is modified (phosphothreonine).

It belongs to the major facilitator superfamily. Sugar transporter (TC 2.A.1.1) family. Glucose transporter subfamily. As to quaternary structure, interacts with SMIM43; the interaction may promote SLC2A3-mediated glucose transport to meet the energy needs of mesendoderm differentiation. As to expression, detected in stomach, placenta, lung and brain.

It localises to the cell membrane. The protein resides in the perikaryon. The protein localises to the cell projection. It catalyses the reaction D-glucose(out) = D-glucose(in). It carries out the reaction D-galactose(in) = D-galactose(out). Its activity is regulated as follows. Deoxyglucose transport is inhibited by D-glucose, D-galactose and maltose. Galactose transport is inhibited by D-glucose and maltose. Its function is as follows. Facilitative glucose transporter. Can also mediate the uptake of various other monosaccharides across the cell membrane. Mediates the uptake of glucose, 2-deoxyglucose, galactose, mannose, xylose and fucose, and probably also dehydroascorbate. Does not mediate fructose transport. Required for mesendoderm differentiation. In Oryctolagus cuniculus (Rabbit), this protein is Solute carrier family 2, facilitated glucose transporter member 3.